Reading from the N-terminus, the 206-residue chain is Probable GTP-binding protein EngB (206 aa).

The EngB-type G domain maps to 24–198 (QGREVAFAGR…HARLDEWLGL (175 aa)). Residues 32 to 39 (GRSNVGKS), 59 to 63 (GRTQL), 77 to 80 (DLPG), 144 to 147 (TKAD), and 177 to 179 (FSA) contribute to the GTP site. Positions 39 and 61 each coordinate Mg(2+).

The protein belongs to the TRAFAC class TrmE-Era-EngA-EngB-Septin-like GTPase superfamily. EngB GTPase family. Mg(2+) serves as cofactor.

Functionally, necessary for normal cell division and for the maintenance of normal septation. This Alkalilimnicola ehrlichii (strain ATCC BAA-1101 / DSM 17681 / MLHE-1) protein is Probable GTP-binding protein EngB.